A 462-amino-acid polypeptide reads, in one-letter code: Probable Xaa-Pro aminopeptidase NECHADRAFT_60613 (462 aa).

Positions 259, 270, 393, and 433 each coordinate Mn(2+).

It belongs to the peptidase M24B family. Mn(2+) serves as cofactor.

It catalyses the reaction Release of any N-terminal amino acid, including proline, that is linked to proline, even from a dipeptide or tripeptide.. Catalyzes the removal of a penultimate prolyl residue from the N-termini of peptides. The sequence is that of Probable Xaa-Pro aminopeptidase NECHADRAFT_60613 from Fusarium vanettenii (strain ATCC MYA-4622 / CBS 123669 / FGSC 9596 / NRRL 45880 / 77-13-4) (Fusarium solani subsp. pisi).